The primary structure comprises 315 residues: Gamma-hemolysin component C (315 aa).

The first 29 residues, 1–29 (MLKNKILTTTLSVSLLAPLANPLLENAKA), serve as a signal peptide directing secretion.

The protein belongs to the aerolysin family. In terms of assembly, toxicity requires sequential binding and synergistic association of a class S and a class F component which form heterooligomeric complexes. HlgC (class S) associates with HlgB (class F) thus forming an CB toxin.

In terms of biological role, toxin that seems to act by forming pores in the membrane of the cell. Has a hemolytic and a leucotoxic activity. The polypeptide is Gamma-hemolysin component C (hlgC) (Staphylococcus aureus (strain COL)).